A 521-amino-acid polypeptide reads, in one-letter code: Formate--tetrahydrofolate ligase (521 aa).

This sequence belongs to the formate--tetrahydrofolate ligase family.

It carries out the reaction (6S)-5,6,7,8-tetrahydrofolate + formate + ATP = (6R)-10-formyltetrahydrofolate + ADP + phosphate. It participates in one-carbon metabolism; tetrahydrofolate interconversion. In Ureaplasma parvum serovar 3 (strain ATCC 700970), this protein is Formate--tetrahydrofolate ligase.